We begin with the raw amino-acid sequence, 411 residues long: Kelch domain-containing protein 10 (411 aa).

Kelch repeat units lie at residues 72–133, 135–186, 187–239, 240–288, 296–342, and 345–388; these read NLYV…LHGH, LLVF…IIHG, FLYV…HDGQ, RIYV…RRCH, EVFI…AVTP, and CMYI…YFPH.

This sequence belongs to the KLHDC10 family. Component of a CRL2 E3 ubiquitin-protein ligase complex, also named ECS (Elongin BC-CUL2/5-SOCS-box protein) complex, composed of CUL2, Elongin BC (ELOB and ELOC), RBX1 and substrate-specific adapter KLHDC10.

It functions in the pathway protein modification; protein ubiquitination. Substrate-recognition component of a Cul2-RING (CRL2) E3 ubiquitin-protein ligase complex of the DesCEND (destruction via C-end degrons) pathway, which recognizes a C-degron located at the extreme C terminus of target proteins, leading to their ubiquitination and degradation. The C-degron recognized by the DesCEND pathway is usually a motif of less than ten residues and can be present in full-length proteins, truncated proteins or proteolytically cleaved forms. The CRL2(KLHDC10) complex specifically recognizes proteins with a proline-glycine (Pro-Gly) or an alanine tail (CAT tail) at the C-terminus, leading to their ubiquitination and degradation. The CRL2(KLHDC10) complex is involved in the ribosome-associated quality control (RQC) pathway, which mediates the extraction of incompletely synthesized nascent chains from stalled ribosomes: CRL2(KLHDC10) acts downstream of NEMF and recognizes CAT tails associated with stalled nascent chains, leading to their ubiquitination and degradation. The chain is Kelch domain-containing protein 10 from Xenopus tropicalis (Western clawed frog).